Reading from the N-terminus, the 78-residue chain is UPF0270 protein YPTB3725 (78 aa).

This sequence belongs to the UPF0270 family.

The sequence is that of UPF0270 protein YPTB3725 from Yersinia pseudotuberculosis serotype I (strain IP32953).